Consider the following 154-residue polypeptide: Transcriptional repressor NrdR (154 aa).

The segment at 3–34 (CPFCRHSDSRVIDSRETDEGQAIRRRRSCPEC) is a zinc-finger region. Positions 46 to 136 (VAVVKRSGVT…VYRSFSSADD (91 aa)) constitute an ATP-cone domain.

Belongs to the NrdR family. Zn(2+) serves as cofactor.

Negatively regulates transcription of bacterial ribonucleotide reductase nrd genes and operons by binding to NrdR-boxes. This chain is Transcriptional repressor NrdR, found in Mycobacterium leprae (strain Br4923).